Consider the following 192-residue polypeptide: UPF0149 protein Spro_3920 (192 aa).

The protein belongs to the UPF0149 family.

This Serratia proteamaculans (strain 568) protein is UPF0149 protein Spro_3920.